The primary structure comprises 46 residues: Diuretic hormone (46 aa).

Isoleucine amide is present on I46.

This sequence belongs to the sauvagine/corticotropin-releasing factor/urotensin I family.

The protein resides in the secreted. In terms of biological role, regulation of fluid secretion. Stimulates primary urine secretion by Malpighian tubules and causes a dose-dependent stimulation of cAMP levels in the tubules. In Acheta domesticus (House cricket), this protein is Diuretic hormone.